Here is a 217-residue protein sequence, read N- to C-terminus: Thymidylate kinase (217 aa).

Residue 7–14 (GIDGAGKS) participates in ATP binding.

Belongs to the thymidylate kinase family.

The enzyme catalyses dTMP + ATP = dTDP + ADP. Functionally, phosphorylation of dTMP to form dTDP in both de novo and salvage pathways of dTTP synthesis. The polypeptide is Thymidylate kinase (Pelodictyon phaeoclathratiforme (strain DSM 5477 / BU-1)).